Here is a 122-residue protein sequence, read N- to C-terminus: Large ribosomal subunit protein uL14 (122 aa).

It belongs to the universal ribosomal protein uL14 family. In terms of assembly, part of the 50S ribosomal subunit. Forms a cluster with proteins L3 and L19. In the 70S ribosome, L14 and L19 interact and together make contacts with the 16S rRNA in bridges B5 and B8.

Functionally, binds to 23S rRNA. Forms part of two intersubunit bridges in the 70S ribosome. In Desulfosudis oleivorans (strain DSM 6200 / JCM 39069 / Hxd3) (Desulfococcus oleovorans), this protein is Large ribosomal subunit protein uL14.